Here is a 428-residue protein sequence, read N- to C-terminus: 3-phosphoshikimate 1-carboxyvinyltransferase (428 aa).

3 residues coordinate 3-phosphoshikimate: lysine 23, serine 24, and arginine 28. Lysine 23 contributes to the phosphoenolpyruvate binding site. Phosphoenolpyruvate is bound by residues glycine 97 and arginine 125. Residues serine 170, serine 171, glutamine 172, serine 198, aspartate 314, asparagine 337, and lysine 341 each contribute to the 3-phosphoshikimate site. Phosphoenolpyruvate is bound at residue glutamine 172. Aspartate 314 acts as the Proton acceptor in catalysis. Phosphoenolpyruvate contacts are provided by arginine 345, arginine 387, and lysine 412.

Belongs to the EPSP synthase family. As to quaternary structure, monomer.

The protein resides in the cytoplasm. It carries out the reaction 3-phosphoshikimate + phosphoenolpyruvate = 5-O-(1-carboxyvinyl)-3-phosphoshikimate + phosphate. Its pathway is metabolic intermediate biosynthesis; chorismate biosynthesis; chorismate from D-erythrose 4-phosphate and phosphoenolpyruvate: step 6/7. Functionally, catalyzes the transfer of the enolpyruvyl moiety of phosphoenolpyruvate (PEP) to the 5-hydroxyl of shikimate-3-phosphate (S3P) to produce enolpyruvyl shikimate-3-phosphate and inorganic phosphate. The sequence is that of 3-phosphoshikimate 1-carboxyvinyltransferase from Hamiltonella defensa subsp. Acyrthosiphon pisum (strain 5AT).